The chain runs to 416 residues: 3-isopropylmalate dehydratase large subunit (416 aa).

The [4Fe-4S] cluster site is built by C299, C357, and C360.

It belongs to the aconitase/IPM isomerase family. LeuC type 2 subfamily. Heterodimer of LeuC and LeuD. [4Fe-4S] cluster serves as cofactor.

It carries out the reaction (2R,3S)-3-isopropylmalate = (2S)-2-isopropylmalate. The protein operates within amino-acid biosynthesis; L-leucine biosynthesis; L-leucine from 3-methyl-2-oxobutanoate: step 2/4. Catalyzes the isomerization between 2-isopropylmalate and 3-isopropylmalate, via the formation of 2-isopropylmaleate. The chain is 3-isopropylmalate dehydratase large subunit from Saccharolobus solfataricus (strain ATCC 35092 / DSM 1617 / JCM 11322 / P2) (Sulfolobus solfataricus).